The primary structure comprises 90 residues: MARMVQCIKLNKEAEGLDFPPLPGELGKKIWQSVSKEAWAGWLKHQTMLINENRLNMADARARQYLLKQTEKYFFGEGADQAQGYVPPQS.

It belongs to the Fe(2+)-trafficking protein family.

In terms of biological role, could be a mediator in iron transactions between iron acquisition and iron-requiring processes, such as synthesis and/or repair of Fe-S clusters in biosynthetic enzymes. In Cupriavidus necator (strain ATCC 17699 / DSM 428 / KCTC 22496 / NCIMB 10442 / H16 / Stanier 337) (Ralstonia eutropha), this protein is Probable Fe(2+)-trafficking protein.